A 254-amino-acid polypeptide reads, in one-letter code: Dihydroorotate dehydrogenase B (NAD(+)), electron transfer subunit (254 aa).

Residues 1 to 99 (MLQTEMKVIQ…LGPLGKGFDI (99 aa)) enclose the FAD-binding FR-type domain. Residues 50 to 53 (RPIS), 67 to 69 (LYR), and 74 to 75 (GT) contribute to the FAD site. Positions 218, 223, 226, and 241 each coordinate [2Fe-2S] cluster.

Belongs to the PyrK family. Heterotetramer of 2 PyrK and 2 PyrD type B subunits. [2Fe-2S] cluster is required as a cofactor. The cofactor is FAD.

It participates in pyrimidine metabolism; UMP biosynthesis via de novo pathway; orotate from (S)-dihydroorotate (NAD(+) route): step 1/1. Its function is as follows. Responsible for channeling the electrons from the oxidation of dihydroorotate from the FMN redox center in the PyrD type B subunit to the ultimate electron acceptor NAD(+). In Listeria monocytogenes serotype 4b (strain F2365), this protein is Dihydroorotate dehydrogenase B (NAD(+)), electron transfer subunit.